Consider the following 536-residue polypeptide: Anthranilate synthase component 1 2 (536 aa).

L-tryptophan contacts are provided by residues Ser59 and 299–301 (PYM). A chorismate-binding site is contributed by 334–335 (GT). Glu361 provides a ligand contact to Mg(2+). Chorismate contacts are provided by residues Tyr449, Arg469, 487-489 (GAG), and Gly489. Glu502 provides a ligand contact to Mg(2+).

The protein belongs to the anthranilate synthase component I family. Tetramer of two components I and two components II. Mg(2+) serves as cofactor.

The catalysed reaction is chorismate + L-glutamine = anthranilate + pyruvate + L-glutamate + H(+). It participates in amino-acid biosynthesis; L-tryptophan biosynthesis; L-tryptophan from chorismate: step 1/5. The polypeptide is Anthranilate synthase component 1 2 (trpE2) (Haloarcula marismortui (strain ATCC 43049 / DSM 3752 / JCM 8966 / VKM B-1809) (Halobacterium marismortui)).